The sequence spans 324 residues: Putative S-adenosyl-L-methionine-dependent methyltransferase MUL_0818 (324 aa).

Residues Asp138 and 167-168 contribute to the S-adenosyl-L-methionine site; that span reads DL.

It belongs to the UPF0677 family.

Its function is as follows. Exhibits S-adenosyl-L-methionine-dependent methyltransferase activity. In Mycobacterium ulcerans (strain Agy99), this protein is Putative S-adenosyl-L-methionine-dependent methyltransferase MUL_0818.